The sequence spans 185 residues: uncharacterized protein (185 aa).

It to M.thermoautotrophicum MTH236.

This is an uncharacterized protein from Methanocaldococcus jannaschii (strain ATCC 43067 / DSM 2661 / JAL-1 / JCM 10045 / NBRC 100440) (Methanococcus jannaschii).